The sequence spans 165 residues: Shikimate kinase (165 aa).

12–17 (GCGKST) is a binding site for ATP. Serine 16 is a binding site for Mg(2+). The substrate site is built by aspartate 34, arginine 57, and glycine 79. Residue arginine 116 participates in ATP binding. Arginine 133 contacts substrate.

Belongs to the shikimate kinase family. As to quaternary structure, monomer. Mg(2+) serves as cofactor.

The protein localises to the cytoplasm. It carries out the reaction shikimate + ATP = 3-phosphoshikimate + ADP + H(+). It participates in metabolic intermediate biosynthesis; chorismate biosynthesis; chorismate from D-erythrose 4-phosphate and phosphoenolpyruvate: step 5/7. Catalyzes the specific phosphorylation of the 3-hydroxyl group of shikimic acid using ATP as a cosubstrate. This is Shikimate kinase from Clostridium botulinum (strain Alaska E43 / Type E3).